The following is a 1898-amino-acid chain: Receptor-type tyrosine-protein phosphatase F (1898 aa).

Residues 1–29 (MAPEPAPGRRMVPLVPALVMLGLMAGAHG) form the signal peptide. The Extracellular segment spans residues 30-1254 (DSKPVFVKVP…QQQEEPEMLW (1225 aa)). Ig-like C2-type domains follow at residues 33-123 (PVFV…AKLS), 135-224 (PTID…ANLY), and 232-314 (PRFS…AQVT). A disulfide bridge connects residues cysteine 54 and cysteine 107. 68 to 77 (KKGKKVSSQR) provides a ligand contact to heparin. Asparagine 117 carries an N-linked (GlcNAc...) asparagine glycan. An intrachain disulfide couples cysteine 156 to cysteine 207. N-linked (GlcNAc...) asparagine glycans are attached at residues asparagine 250 and asparagine 295. Cysteine 253 and cysteine 298 form a disulfide bridge. Fibronectin type-III domains follow at residues 321–411 (PPID…TGEQ), 416–510 (PPRR…TQQG), 514–604 (QPAD…TAQS), 609–706 (PPQK…TDED), 711–810 (PPRK…TTGA), 811–904 (VPGR…TPED), 909–1001 (FPQN…TMPV), and 1005–1089 (FAKN…TAPD). The disordered stretch occupies residues 693–712 (GPESSPVLVRTDEDVPSGPP). An N-linked (GlcNAc...) asparagine glycan is attached at asparagine 721. N-linked (GlcNAc...) asparagine glycans are attached at residues asparagine 941, asparagine 957, and asparagine 960. The chain crosses the membrane as a helical span at residues 1255–1275 (VTGPVLAVILIILIVIAILLF). At 1276–1898 (KRKRTHSPSS…YLGSFDHYAT (623 aa)) the chain is on the cytoplasmic side. Phosphoserine is present on serine 1296. Tyrosine-protein phosphatase domains follow at residues 1343–1598 (FSQE…LLEA) and 1630–1889 (MELE…ALEY). Substrate is bound by residues aspartate 1507, 1539–1545 (CSAGVGR), and glutamine 1583. Cysteine 1539 acts as the Phosphocysteine intermediate in catalysis. Catalysis depends on cysteine 1830, which acts as the Phosphocysteine intermediate.

It belongs to the protein-tyrosine phosphatase family. Receptor class 2A subfamily. As to quaternary structure, interacts with GRIP1. Interacts with PPFIA1, PPFIA2 and PPFIA3. Interacts with PTPRF. Expressed in the cell of the T lineage but not in cells of any other hemopoietic lineage.

The protein localises to the membrane. It carries out the reaction O-phospho-L-tyrosyl-[protein] + H2O = L-tyrosyl-[protein] + phosphate. Functionally, possible cell adhesion receptor. It possesses an intrinsic protein tyrosine phosphatase activity (PTPase) and dephosphorylates EPHA2 regulating its activity. This chain is Receptor-type tyrosine-protein phosphatase F (Ptprf), found in Mus musculus (Mouse).